The primary structure comprises 309 residues: Protein-L-isoaspartate O-methyltransferase 2 (309 aa).

The Nuclear localization signal motif lies at 23-28; it reads KKRKKK. Residue serine 144 is part of the active site.

This sequence belongs to the methyltransferase superfamily. L-isoaspartyl/D-aspartyl protein methyltransferase family. As to expression, expressed in rosette leaves, stems, cauline leaves, flowers and developing seeds.

It is found in the nucleus. The catalysed reaction is [protein]-L-isoaspartate + S-adenosyl-L-methionine = [protein]-L-isoaspartate alpha-methyl ester + S-adenosyl-L-homocysteine. Catalyzes the methyl esterification of L-isoaspartyl residues in peptides and proteins that result from spontaneous decomposition of normal L-aspartyl and L-asparaginyl residues. It plays a role in the repair and/or degradation of damaged proteins. The protein is Protein-L-isoaspartate O-methyltransferase 2 (PIMT2) of Arabidopsis thaliana (Mouse-ear cress).